We begin with the raw amino-acid sequence, 217 residues long: Translation initiation factor IF-3 (217 aa).

This sequence belongs to the IF-3 family. In terms of assembly, monomer.

The protein localises to the cytoplasm. Its function is as follows. IF-3 binds to the 30S ribosomal subunit and shifts the equilibrium between 70S ribosomes and their 50S and 30S subunits in favor of the free subunits, thus enhancing the availability of 30S subunits on which protein synthesis initiation begins. The sequence is that of Translation initiation factor IF-3 from Synechococcus sp. (strain CC9902).